The primary structure comprises 626 residues: Probable serine/threonine-protein kinase CCRP1 (626 aa).

Positions 36 to 291 (YSKGRMLGKG…LDEILQHPFL (256 aa)) constitute a Protein kinase domain. ATP-binding positions include 42–50 (LGKGGFAKC) and lysine 65. Serine 71 carries the phosphoserine modification. Aspartate 159 serves as the catalytic Proton acceptor. The disordered stretch occupies residues 399–433 (NFTKTGSWQSNLNGTQSVKGSSRPQTVQQKGDLKS). Over residues 400 to 427 (FTKTGSWQSNLNGTQSVKGSSRPQTVQQ) the composition is skewed to polar residues. POLO box domains are found at residues 471–554 (WVKK…YLEG) and 574–626 (YVKK…PISP).

It belongs to the protein kinase superfamily. Ser/Thr protein kinase family. CDC5/Polo subfamily. As to expression, embryo.

The enzyme catalyses L-seryl-[protein] + ATP = O-phospho-L-seryl-[protein] + ADP + H(+). It catalyses the reaction L-threonyl-[protein] + ATP = O-phospho-L-threonyl-[protein] + ADP + H(+). Functionally, may play a role in the division of some cell types. The sequence is that of Probable serine/threonine-protein kinase CCRP1 (CCRP1) from Zea mays (Maize).